Reading from the N-terminus, the 216-residue chain is Peptide methionine sulfoxide reductase MsrA (216 aa).

The active site involves Cys-57.

Belongs to the MsrA Met sulfoxide reductase family.

The catalysed reaction is L-methionyl-[protein] + [thioredoxin]-disulfide + H2O = L-methionyl-(S)-S-oxide-[protein] + [thioredoxin]-dithiol. It catalyses the reaction [thioredoxin]-disulfide + L-methionine + H2O = L-methionine (S)-S-oxide + [thioredoxin]-dithiol. Its function is as follows. Has an important function as a repair enzyme for proteins that have been inactivated by oxidation. Catalyzes the reversible oxidation-reduction of methionine sulfoxide in proteins to methionine. This Agrobacterium fabrum (strain C58 / ATCC 33970) (Agrobacterium tumefaciens (strain C58)) protein is Peptide methionine sulfoxide reductase MsrA.